The sequence spans 363 residues: tRNA/tmRNA (uracil-C(5))-methyltransferase (363 aa).

Residues glutamine 187, tyrosine 215, asparagine 220, glutamate 236, and aspartate 296 each contribute to the S-adenosyl-L-methionine site. Cysteine 321 functions as the Nucleophile in the catalytic mechanism. The active-site Proton acceptor is the glutamate 355.

This sequence belongs to the class I-like SAM-binding methyltransferase superfamily. RNA M5U methyltransferase family. TrmA subfamily.

The enzyme catalyses uridine(54) in tRNA + S-adenosyl-L-methionine = 5-methyluridine(54) in tRNA + S-adenosyl-L-homocysteine + H(+). The catalysed reaction is uridine(341) in tmRNA + S-adenosyl-L-methionine = 5-methyluridine(341) in tmRNA + S-adenosyl-L-homocysteine + H(+). In terms of biological role, dual-specificity methyltransferase that catalyzes the formation of 5-methyluridine at position 54 (m5U54) in all tRNAs, and that of position 341 (m5U341) in tmRNA (transfer-mRNA). The chain is tRNA/tmRNA (uracil-C(5))-methyltransferase from Pseudomonas aeruginosa (strain LESB58).